An 87-amino-acid chain; its full sequence is RNA-binding protein Hfq (87 aa).

The 60-residue stretch at Asp9–Val68 folds into the Sm domain. Positions Ala65 to Glu87 are disordered. A compositionally biased stretch (basic and acidic residues) spans His71–Glu87.

Belongs to the Hfq family.

In terms of biological role, RNA chaperone that binds small regulatory RNA (sRNAs) and mRNAs to facilitate mRNA translational regulation in response to envelope stress, environmental stress and changes in metabolite concentrations. Also binds with high specificity to tRNAs. Essential for virulence in the suckling mouse model of cholera pathogenesis. The protein is RNA-binding protein Hfq of Vibrio cholerae serotype O1 (strain ATCC 39315 / El Tor Inaba N16961).